We begin with the raw amino-acid sequence, 128 residues long: Glycine cleavage system H protein (128 aa).

A Lipoyl-binding domain is found at 23–105; it reads KVRIGITDFA…YEKAWMIVVE (83 aa). Lys64 is subject to N6-lipoyllysine.

Belongs to the GcvH family. The glycine cleavage system is composed of four proteins: P, T, L and H. The cofactor is (R)-lipoate.

Its function is as follows. The glycine cleavage system catalyzes the degradation of glycine. The H protein shuttles the methylamine group of glycine from the P protein to the T protein. In terms of biological role, is also involved in protein lipoylation via its role as an octanoyl/lipoyl carrier protein intermediate. The protein is Glycine cleavage system H protein of Halalkalibacterium halodurans (strain ATCC BAA-125 / DSM 18197 / FERM 7344 / JCM 9153 / C-125) (Bacillus halodurans).